Reading from the N-terminus, the 293-residue chain is Oxidoreductase R2 (293 aa).

It belongs to the asaB hydroxylase/desaturase family.

Its pathway is secondary metabolite biosynthesis. In terms of biological role, oxidoreductase; part of the gene cluster that mediates the biosynthesis of squalestatin S1 (SQS1, also known as zaragozic acid A), a heavily oxidized fungal polyketide that offers potent cholesterol lowering activity by targeting squalene synthase (SS). SQS1 is composed of a 2,8-dioxobicyclic[3.2.1]octane-3,4,5-tricarboxyclic acid core that is connected to two lipophilic polyketide arms. These initial steps feature the priming of an unusual benzoic acid starter unit onto the highly reducing polyketide synthase pks2, followed by oxaloacetate extension and product release to generate a tricarboxylic acid containing product. The phenylalanine ammonia lyase (PAL) M7 and the acyl-CoA ligase M9 are involved in transforming phenylalanine into benzoyl-CoA. The citrate synthase-like protein R3 is involved in connecting the C-alpha-carbons of the hexaketide chain and oxaloacetate to afford the tricarboxylic acid unit. The potential hydrolytic enzymes, M8 and M10, are in close proximity to pks2 and may participate in product release. On the other side, the tetraketide arm is synthesized by a the squalestatin tetraketide synthase pks1 and enzymatically esterified to the core in the last biosynthetic step, by the acetyltransferase M4. The biosynthesis of the tetraketide must involve 3 rounds of chain extension. After the first and second rounds methyl-transfer occurs, and in all rounds of extension the ketoreductase and dehydratase are active. The enoyl reductase and C-MeT of pks1 are not active in the final round of extension. The acetyltransferase M4 appears to have a broad substrate selectivity for its acyl CoA substrate, allowing the in vitro synthesis of novel squalestatins. The biosynthesis of SQS1 requires several oxidative steps likely performed by oxidoreductases M1, R1 and R2. Finally, in support of the identification of the cluster as being responsible for SQS1 production, the cluster contains a gene encoding a putative squalene synthase (SS) R6, suggesting a likely mechanism for self-resistance. The chain is Oxidoreductase R2 from Phoma sp. (strain ATCC 20986 / MF5453).